The sequence spans 84 residues: Small ribosomal subunit protein uS15 (84 aa).

The protein belongs to the universal ribosomal protein uS15 family. In terms of assembly, part of the 30S ribosomal subunit. Forms a bridge to the 50S subunit in the 70S ribosome, contacting the 23S rRNA.

In terms of biological role, one of the primary rRNA binding proteins, it binds directly to 16S rRNA where it helps nucleate assembly of the platform of the 30S subunit by binding and bridging several RNA helices of the 16S rRNA. Its function is as follows. Forms an intersubunit bridge (bridge B4) with the 23S rRNA of the 50S subunit in the ribosome. The protein is Small ribosomal subunit protein uS15 of Thermosipho africanus (strain TCF52B).